Consider the following 88-residue polypeptide: UPF0223 protein BH2638 (88 aa).

Belongs to the UPF0223 family.

The sequence is that of UPF0223 protein BH2638 from Halalkalibacterium halodurans (strain ATCC BAA-125 / DSM 18197 / FERM 7344 / JCM 9153 / C-125) (Bacillus halodurans).